We begin with the raw amino-acid sequence, 157 residues long: 2-C-methyl-D-erythritol 2,4-cyclodiphosphate synthase (157 aa).

Residues D8 and H10 each contribute to the a divalent metal cation site. 4-CDP-2-C-methyl-D-erythritol 2-phosphate is bound by residues D8–H10 and H34–S35. H42 is an a divalent metal cation binding site. Residues D56 to G58, F61 to D65, A100 to A106, T132 to E135, F139, and R142 contribute to the 4-CDP-2-C-methyl-D-erythritol 2-phosphate site.

It belongs to the IspF family. Homotrimer. It depends on a divalent metal cation as a cofactor.

The catalysed reaction is 4-CDP-2-C-methyl-D-erythritol 2-phosphate = 2-C-methyl-D-erythritol 2,4-cyclic diphosphate + CMP. It functions in the pathway isoprenoid biosynthesis; isopentenyl diphosphate biosynthesis via DXP pathway; isopentenyl diphosphate from 1-deoxy-D-xylulose 5-phosphate: step 4/6. Involved in the biosynthesis of isopentenyl diphosphate (IPP) and dimethylallyl diphosphate (DMAPP), two major building blocks of isoprenoid compounds. Catalyzes the conversion of 4-diphosphocytidyl-2-C-methyl-D-erythritol 2-phosphate (CDP-ME2P) to 2-C-methyl-D-erythritol 2,4-cyclodiphosphate (ME-CPP) with a corresponding release of cytidine 5-monophosphate (CMP). This is 2-C-methyl-D-erythritol 2,4-cyclodiphosphate synthase from Serratia proteamaculans (strain 568).